A 434-amino-acid chain; its full sequence is MKRVYSKIESIAGNVITVTAQGIKYGELAIVKAKDTSSLAEVIKLDREKVSLQVYGGTRGVSTSDEIKFLGHSMQVSFSDNLLGRIFDGSGNPRDGGPSLDDNLIEIGGPSANPTKRIVPRNMIRTGLPMIDVFNTLVESQKLPIFSVSGEPYNELLIRIALQAEVDLIILGGMGLKHDDYLTFKDSLEKGGALSRAIFFVHTANDSVVESLTVPDISLSVAEKFALKGKKVLVLLTDMTNFADAMKEISITMEQVPSNRGYPGDLYSQLAYRYEKAIDFEGAGSITILAVTTMPGDDVTHPVPDNTGYITEGQYYLKGGRIEPFGSLSRLKQMVNSRTRDDHRTIMDSMIKLYASSKESVEKKAMGFNMTKWDEKLLKYSNMFESKMMDLSVNIPLEEALDLGWSILASCFSPKETGIKTDLIEKYWPKKETY.

It belongs to the ATPase alpha/beta chains family.

Functionally, produces ATP from ADP in the presence of a proton gradient across the membrane. The V-type beta chain is a regulatory subunit. The sequence is that of V-type ATP synthase beta chain (atpB) from Borreliella burgdorferi (strain ATCC 35210 / DSM 4680 / CIP 102532 / B31) (Borrelia burgdorferi).